A 274-amino-acid polypeptide reads, in one-letter code: Putative septum site-determining protein MinD (274 aa).

22-29 provides a ligand contact to ATP; that stretch reads KGGVGKTT.

This sequence belongs to the ParA family. MinD subfamily.

It is found in the plastid. The protein resides in the chloroplast. Its function is as follows. ATPase required for the correct placement of the division site. The protein is Putative septum site-determining protein MinD (minD-A) of Nephroselmis olivacea (Green alga).